The sequence spans 39 residues: Bacteriocin SRCAM 602 (39 aa).

It belongs to the bacteriocin class IIA/YGNGV family.

The protein resides in the secreted. Its function is as follows. Bacteriocin with antibacterial activity against C.jejuni. This is Bacteriocin SRCAM 602 from Paenibacillus polymyxa (Bacillus polymyxa).